The primary structure comprises 383 residues: MRLLSFKKSKIVSIGTELEFQIIDCSSLSLVSRSKELMRALKDMRYRDQIKPEITQSMIEINSSIHQSAKEMYDELLELQKILVETAASIDIAFCGGGTHPFQQWTMQKIFPSKRFKKKFNQYRYLSKRATVFGQHIHIGCPTGDDAIYLTHALARYVPHFIAISASSPFYLGINTNYCSSRSTIFNAFPLSGVIPYLRSWQEFSDYYRKMYRWKIIENMKDFYWDIRPKPELGTIEIRVCDTPLTLRKSILITAYIQALALYLLEERPVQLSHDLYYVYNYNRFQASRHGLEGELTVTDKDRPIPIMDDILETIKKIEQYINGLGNGEYIEELCSDVINKQNDSVLINKIYKQDGSFSKLVAAQCELWLSDSKDRKWMTQPS.

This sequence belongs to the glutamate--cysteine ligase type 2 family. YbdK subfamily.

It carries out the reaction L-cysteine + L-glutamate + ATP = gamma-L-glutamyl-L-cysteine + ADP + phosphate + H(+). Its function is as follows. ATP-dependent carboxylate-amine ligase which exhibits weak glutamate--cysteine ligase activity. The polypeptide is Putative glutamate--cysteine ligase 2-2 (Legionella pneumophila (strain Paris)).